The sequence spans 335 residues: Succinylglutamate desuccinylase (335 aa).

3 residues coordinate Zn(2+): histidine 59, glutamate 62, and histidine 151. Glutamate 215 is an active-site residue.

Belongs to the AspA/AstE family. Succinylglutamate desuccinylase subfamily. Zn(2+) is required as a cofactor.

The enzyme catalyses N-succinyl-L-glutamate + H2O = L-glutamate + succinate. It functions in the pathway amino-acid degradation; L-arginine degradation via AST pathway; L-glutamate and succinate from L-arginine: step 5/5. Its function is as follows. Transforms N(2)-succinylglutamate into succinate and glutamate. The protein is Succinylglutamate desuccinylase of Pseudomonas syringae pv. tomato (strain ATCC BAA-871 / DC3000).